We begin with the raw amino-acid sequence, 131 residues long: Large ribosomal subunit protein eL32 (131 aa).

The protein belongs to the eukaryotic ribosomal protein eL32 family.

The sequence is that of Large ribosomal subunit protein eL32 (RPL32) from Eremothecium gossypii (strain ATCC 10895 / CBS 109.51 / FGSC 9923 / NRRL Y-1056) (Yeast).